The primary structure comprises 133 residues: MAKPEGGAEPKVASPERVAAFRTGISAESRAAAYLMAKGYRILAKRYRTPHGEIDIVARRRNLIAFVEVKARASLDDAAYAVTPRQQQRIIDAAQGWLAAHPEHAEFELRFDAMLIAPRSLPRHVLAAFDAST.

This sequence belongs to the UPF0102 family.

This Bradyrhizobium diazoefficiens (strain JCM 10833 / BCRC 13528 / IAM 13628 / NBRC 14792 / USDA 110) protein is UPF0102 protein bll0669.